The primary structure comprises 217 residues: Uracil-DNA glycosylase (217 aa).

Asp62 serves as the catalytic Proton acceptor.

This sequence belongs to the uracil-DNA glycosylase (UDG) superfamily. UNG family.

It is found in the cytoplasm. The enzyme catalyses Hydrolyzes single-stranded DNA or mismatched double-stranded DNA and polynucleotides, releasing free uracil.. In terms of biological role, excises uracil residues from the DNA which can arise as a result of misincorporation of dUMP residues by DNA polymerase or due to deamination of cytosine. This is Uracil-DNA glycosylase from Streptococcus equi subsp. zooepidemicus (strain H70).